The chain runs to 152 residues: Ribosome maturation factor RimP (152 aa).

It belongs to the RimP family.

Its subcellular location is the cytoplasm. Its function is as follows. Required for maturation of 30S ribosomal subunits. The sequence is that of Ribosome maturation factor RimP from Aeromonas salmonicida (strain A449).